Consider the following 271-residue polypeptide: Phosphatidylglycerol--prolipoprotein diacylglyceryl transferase (271 aa).

The next 7 helical transmembrane spans lie at 18–38 (IFGL…LVAL), 60–80 (YFIW…ILIY), 103–123 (FVGI…IATY), 137–157 (LDLV…GNFL), 181–201 (PSQL…LLLI), 209–229 (GELI…CEFF), and 236–256 (IGFV…MFLL). Arg152 contributes to the a 1,2-diacyl-sn-glycero-3-phospho-(1'-sn-glycerol) binding site.

It belongs to the Lgt family.

The protein resides in the cell inner membrane. It carries out the reaction L-cysteinyl-[prolipoprotein] + a 1,2-diacyl-sn-glycero-3-phospho-(1'-sn-glycerol) = an S-1,2-diacyl-sn-glyceryl-L-cysteinyl-[prolipoprotein] + sn-glycerol 1-phosphate + H(+). The protein operates within protein modification; lipoprotein biosynthesis (diacylglyceryl transfer). In terms of biological role, catalyzes the transfer of the diacylglyceryl group from phosphatidylglycerol to the sulfhydryl group of the N-terminal cysteine of a prolipoprotein, the first step in the formation of mature lipoproteins. The polypeptide is Phosphatidylglycerol--prolipoprotein diacylglyceryl transferase (Campylobacter lari (strain RM2100 / D67 / ATCC BAA-1060)).